The primary structure comprises 378 residues: Homoserine O-acetyltransferase (378 aa).

The AB hydrolase-1 domain maps to 54 to 355 (NAILVCHALS…NNPAGHDSFL (302 aa)). Ser-159 (nucleophile) is an active-site residue. A substrate-binding site is contributed by Arg-228. Catalysis depends on residues Asp-318 and His-351. Asp-352 contacts substrate.

This sequence belongs to the AB hydrolase superfamily. MetX family. As to quaternary structure, homodimer.

Its subcellular location is the cytoplasm. It carries out the reaction L-homoserine + acetyl-CoA = O-acetyl-L-homoserine + CoA. Its pathway is amino-acid biosynthesis; L-methionine biosynthesis via de novo pathway; O-acetyl-L-homoserine from L-homoserine: step 1/1. Transfers an acetyl group from acetyl-CoA to L-homoserine, forming acetyl-L-homoserine. This Leptospira biflexa serovar Patoc (strain Patoc 1 / Ames) protein is Homoserine O-acetyltransferase.